A 437-amino-acid chain; its full sequence is Adenylosuccinate synthetase (437 aa).

GTP contacts are provided by residues 13 to 19 (GDEGKGK) and 41 to 43 (GHT). Asp14 functions as the Proton acceptor in the catalytic mechanism. Asp14 and Gly41 together coordinate Mg(2+). Residues 14-17 (DEGK), 39-42 (NAGH), Thr130, Arg144, Gln225, Thr240, and Arg310 each bind IMP. The active-site Proton donor is His42. 306 to 312 (ATTGRLR) is a binding site for substrate. Residues Arg312, 338–340 (KLD), and 421–423 (STG) each bind GTP.

It belongs to the adenylosuccinate synthetase family. Homodimer. The cofactor is Mg(2+).

It localises to the cytoplasm. The catalysed reaction is IMP + L-aspartate + GTP = N(6)-(1,2-dicarboxyethyl)-AMP + GDP + phosphate + 2 H(+). The protein operates within purine metabolism; AMP biosynthesis via de novo pathway; AMP from IMP: step 1/2. Its function is as follows. Plays an important role in the de novo pathway of purine nucleotide biosynthesis. Catalyzes the first committed step in the biosynthesis of AMP from IMP. This chain is Adenylosuccinate synthetase, found in Psychromonas ingrahamii (strain DSM 17664 / CCUG 51855 / 37).